The primary structure comprises 150 residues: SsrA-binding protein (150 aa).

A disordered region spans residues 129 to 150 (ETEKQRDWQREKSRIMKGGSKE).

Belongs to the SmpB family.

Its subcellular location is the cytoplasm. Required for rescue of stalled ribosomes mediated by trans-translation. Binds to transfer-messenger RNA (tmRNA), required for stable association of tmRNA with ribosomes. tmRNA and SmpB together mimic tRNA shape, replacing the anticodon stem-loop with SmpB. tmRNA is encoded by the ssrA gene; the 2 termini fold to resemble tRNA(Ala) and it encodes a 'tag peptide', a short internal open reading frame. During trans-translation Ala-aminoacylated tmRNA acts like a tRNA, entering the A-site of stalled ribosomes, displacing the stalled mRNA. The ribosome then switches to translate the ORF on the tmRNA; the nascent peptide is terminated with the 'tag peptide' encoded by the tmRNA and targeted for degradation. The ribosome is freed to recommence translation, which seems to be the essential function of trans-translation. This is SsrA-binding protein from Cupriavidus pinatubonensis (strain JMP 134 / LMG 1197) (Cupriavidus necator (strain JMP 134)).